The chain runs to 216 residues: ATP-dependent Clp protease proteolytic subunit (216 aa).

Catalysis depends on serine 109, which acts as the Nucleophile. Histidine 134 is an active-site residue.

Belongs to the peptidase S14 family. In terms of assembly, fourteen ClpP subunits assemble into 2 heptameric rings which stack back to back to give a disk-like structure with a central cavity, resembling the structure of eukaryotic proteasomes.

It is found in the cytoplasm. The catalysed reaction is Hydrolysis of proteins to small peptides in the presence of ATP and magnesium. alpha-casein is the usual test substrate. In the absence of ATP, only oligopeptides shorter than five residues are hydrolyzed (such as succinyl-Leu-Tyr-|-NHMec, and Leu-Tyr-Leu-|-Tyr-Trp, in which cleavage of the -Tyr-|-Leu- and -Tyr-|-Trp bonds also occurs).. Functionally, cleaves peptides in various proteins in a process that requires ATP hydrolysis. Has a chymotrypsin-like activity. Plays a major role in the degradation of misfolded proteins. The protein is ATP-dependent Clp protease proteolytic subunit of Rhodospirillum rubrum (strain ATCC 11170 / ATH 1.1.1 / DSM 467 / LMG 4362 / NCIMB 8255 / S1).